A 526-amino-acid polypeptide reads, in one-letter code: Dye-decolorizing peroxidase (526 aa).

An N-terminal signal peptide occupies residues 1–21; it reads MRKSISTFILLSVLSVGQLVA. A propeptide spanning residues 22–63 is cleaved from the precursor; that stretch reads ARPRSTNAPPRRRTPQPRRTTSLFINPPALPDLPTVQAVDKL. N186 carries N-linked (GlcNAc...) asparagine glycosylation. D231 (proton acceptor) is an active-site residue. N-linked (GlcNAc...) asparagine glycosylation occurs at N367. H376 provides a ligand contact to heme. N-linked (GlcNAc...) asparagine glycans are attached at residues N473 and N484.

The protein belongs to the DyP-type peroxidase family. The cofactor is heme b.

Its subcellular location is the secreted. It catalyses the reaction Reactive Blue 5 + 2 H2O2 = 2,2'-disulfonyl azobenzene + 3-[(4-amino-6-chloro-1,3,5-triazin-2-yl)amino]benzenesulfonate + phthalate + 2 H2O + 2 H(+). It carries out the reaction 2 a phenolic donor + H2O2 = 2 a phenolic radical donor + 2 H2O. In terms of biological role, manganese-independent peroxidase that is able to convert a large number of compounds, but its physiological substrate is not known. In addition to classic peroxidase substrates (e.g. 2,6-dimethoxyphenol), oxidizes dyes such as Reactive Blue 5 and Reactive Black 5. In Mycena epipterygia (Yellow-stemmed mycena), this protein is Dye-decolorizing peroxidase.